The following is a 329-amino-acid chain: MQTLAQHLSSQGIQAPLAQLLTTLADTSKAISHAVRHGALAGVLGATEQENVQGETQKKLDVITNDMLKEALTADSTVRGLASEEEDHIVEVGQSGDFLVCFDPLDGSSNIDINSLVGTIFSVLPAPSGELSEQSFLQPGRQQVAAGYVLYGPSTMLALTTGQGVQLFTLNPETNEYLLTNEAMSISKDTSEFAINMSNQRFWEAPMQTYIADLLLGKIGPREKSFNMRWIAAMVGDVHRVLSRGGLFTYPTDNKNPEKPYKLRLMYEANPMSFLVEQAGGKASTGYETIMDILPSEIHQRVAVILGSANEVDACLEYHGQDYSEEPSL.

Mg(2+)-binding residues include E84, D103, L105, and D106. Substrate-binding positions include 106–109 (DGSS), N196, and K262. E268 serves as a coordination point for Mg(2+).

This sequence belongs to the FBPase class 1 family. As to quaternary structure, homotetramer. Mg(2+) serves as cofactor.

The protein resides in the cytoplasm. The enzyme catalyses beta-D-fructose 1,6-bisphosphate + H2O = beta-D-fructose 6-phosphate + phosphate. Its pathway is carbohydrate biosynthesis; gluconeogenesis. The polypeptide is Fructose-1,6-bisphosphatase class 1 (Shewanella loihica (strain ATCC BAA-1088 / PV-4)).